Consider the following 234-residue polypeptide: Transcription factor ILR3 (234 aa).

The interval 34 to 85 is disordered; the sequence is QPIGVSSNSSAGVDGSAGNSEASKEPGSKKRGRCESSSATSSKACREKQRRD. The span at 36 to 54 shows a compositional bias: polar residues; that stretch reads IGVSSNSSAGVDGSAGNSE. Residues 71 to 122 form the bHLH domain; it reads SATSSKACREKQRRDRLNDKFMELGAILEPGNPPKTDKAAILVDAVRMVTQL.

As to quaternary structure, homodimer. Interacts with BTS and BHLH47/PYE. Widely expressed throughout development, mostly in vasculatures.

The protein resides in the nucleus. In terms of biological role, transcription factor. Plays a role in resistance to amide-linked indole-3-acetic acid (IAA) conjugates such as IAA-Leu and IAA-Phe. May regulate gene expression in response to metal homeostasis changes. The protein is Transcription factor ILR3 (ILR3) of Arabidopsis thaliana (Mouse-ear cress).